Consider the following 128-residue polypeptide: Cystatin-12 (128 aa).

The N-terminal stretch at 1 to 21 is a signal peptide; sequence MLWKSVLSVALIVLGIHDCSF. 2 disulfides stabilise this stretch: cysteine 82–cysteine 92 and cysteine 105–cysteine 125. A glycan (N-linked (GlcNAc...) asparagine) is linked at asparagine 122.

The protein belongs to the cystatin family. In terms of tissue distribution, located at the very proximal caput epididymis (at protein level). Expressed in epididymis, Sertoli cells and testis. Also found to be weakly expressed in ovary and prostate.

Its subcellular location is the secreted. Functionally, may play a specialized role in spermatogenesis. The sequence is that of Cystatin-12 (Cst12) from Mus musculus (Mouse).